Consider the following 104-residue polypeptide: PTS system lactose-specific EIIA component (104 aa).

Residues 1–102 enclose the PTS EIIA type-3 domain; the sequence is MNRDEVQLLG…MKHLIELYKK (102 aa). His78 acts as the Tele-phosphohistidine intermediate in catalysis. His78 carries the post-translational modification Phosphohistidine; by HPr. Asp81 provides a ligand contact to Mg(2+).

In terms of assembly, homotrimer. Mg(2+) is required as a cofactor.

It is found in the cytoplasm. Functionally, the phosphoenolpyruvate-dependent sugar phosphotransferase system (sugar PTS), a major carbohydrate active transport system, catalyzes the phosphorylation of incoming sugar substrates concomitantly with their translocation across the cell membrane. The enzyme II LacEF PTS system is involved in lactose transport. This chain is PTS system lactose-specific EIIA component, found in Staphylococcus epidermidis (strain ATCC 35984 / DSM 28319 / BCRC 17069 / CCUG 31568 / BM 3577 / RP62A).